We begin with the raw amino-acid sequence, 276 residues long: Undecaprenyl-diphosphatase (276 aa).

A run of 7 helical transmembrane segments spans residues 42–62 (AVTA…IVYF), 88–108 (ALLG…GYLG), 116–136 (LRSL…IVYA), 149–169 (MRLP…VPGV), 187–207 (VAAT…AGIF), 222–242 (SLVV…AWLL), and 253–273 (FVWY…TGLV).

Belongs to the UppP family.

It localises to the cell membrane. The catalysed reaction is di-trans,octa-cis-undecaprenyl diphosphate + H2O = di-trans,octa-cis-undecaprenyl phosphate + phosphate + H(+). Functionally, catalyzes the dephosphorylation of undecaprenyl diphosphate (UPP). Confers resistance to bacitracin. This Acidothermus cellulolyticus (strain ATCC 43068 / DSM 8971 / 11B) protein is Undecaprenyl-diphosphatase.